The chain runs to 88 residues: Small ribosomal subunit protein uS15 (88 aa).

The protein belongs to the universal ribosomal protein uS15 family. In terms of assembly, part of the 30S ribosomal subunit. Forms a bridge to the 50S subunit in the 70S ribosome, contacting the 23S rRNA.

Its function is as follows. One of the primary rRNA binding proteins, it binds directly to 16S rRNA where it helps nucleate assembly of the platform of the 30S subunit by binding and bridging several RNA helices of the 16S rRNA. Functionally, forms an intersubunit bridge (bridge B4) with the 23S rRNA of the 50S subunit in the ribosome. This chain is Small ribosomal subunit protein uS15, found in Opitutus terrae (strain DSM 11246 / JCM 15787 / PB90-1).